The chain runs to 1368 residues: Protein suppressor 2 of zeste (1368 aa).

The RING-type zinc-finger motif lies at 35–74 (CRLCRGYMIDPTTVDYCYHTYCRSCILKHLLRAVYCPECK). Disordered stretches follow at residues 245 to 321 (SRIN…FKSL), 448 to 628 (QPLQ…QQQQ), 640 to 718 (TLPT…AVPQ), 861 to 903 (AGGK…KRSC), 935 to 1001 (ALSG…NGTA), 1057 to 1103 (SANP…STSN), 1116 to 1141 (ISAN…GDDL), 1161 to 1193 (AASS…ASVR), 1211 to 1271 (STAA…KKPT), and 1298 to 1322 (VLSS…RPEP). Positions 449–461 (PLQQSASNPDSKY) are enriched in polar residues. Over residues 462–495 (SPNASPMSSCSSSTNGSSSSLGTADASTSTSTSS) the composition is skewed to low complexity. Residues 496–506 (SHRKRKKKHSK) show a composition bias toward basic residues. Low complexity-rich tracts occupy residues 599–628 (AEPE…QQQQ) and 672–689 (PKQQ…VLQQ). Composition is skewed to polar residues over residues 936–953 (LSGQ…NAYR) and 962–977 (LRNT…SKSS). Composition is skewed to low complexity over residues 1078–1099 (NNNN…NNNN), 1119–1138 (NSNG…TTNG), 1161–1183 (AASS…NANA), and 1231–1263 (STSN…ATSP).

The protein resides in the nucleus. Regulates expression of the homeotic selector genes by influencing higher-order chromatin structure through interaction with other proteins. In Drosophila melanogaster (Fruit fly), this protein is Protein suppressor 2 of zeste (Su(z)2).